We begin with the raw amino-acid sequence, 467 residues long: Glycosyl hydrolase family 109 protein (467 aa).

Positions 1-31 form a signal peptide, tat-type signal; sequence MKNFNRRAFLKAAGATTAGLVTSGLILPASA. NAD(+)-binding positions include 66 to 67, aspartate 88, 137 to 140, 157 to 158, and asparagine 186; these read QR, WQWH, and EV. Residues tyrosine 215, arginine 234, 246–249, and tyrosine 328 each bind substrate; that span reads YPTH. NAD(+) is bound at residue tyrosine 246.

The protein belongs to the Gfo/Idh/MocA family. Glycosyl hydrolase 109 subfamily. The cofactor is NAD(+). In terms of processing, predicted to be exported by the Tat system. The position of the signal peptide cleavage has not been experimentally proven.

In terms of biological role, glycosidase. The sequence is that of Glycosyl hydrolase family 109 protein from Shewanella woodyi (strain ATCC 51908 / MS32).